We begin with the raw amino-acid sequence, 189 residues long: Interferon alpha-13 (189 aa).

The signal sequence occupies residues 1–23 (MARPCAFLMVLVVLSYWSACSLG). 2 disulfides stabilise this stretch: Cys-24-Cys-122 and Cys-52-Cys-162. Asn-94 and Asn-101 each carry an N-linked (GlcNAc...) asparagine glycan.

The protein belongs to the alpha/beta interferon family.

The protein resides in the secreted. Exhibits antiviral activity against Theiler's virus, Mengo virus and vesicular stomatitis virus. Interferons alpha stimulate the production of two enzymes: a protein kinase and an oligoadenylate synthetase. This Mus musculus (Mouse) protein is Interferon alpha-13 (Ifna13).